The chain runs to 479 residues: Anaerobic nitric oxide reductase flavorubredoxin (479 aa).

The zinc metallo-hydrolase stretch occupies residues leucine 30–isoleucine 210. Positions 79, 81, 83, 147, 166, and 227 each coordinate Fe cation. Positions isoleucine 254–alanine 393 constitute a Flavodoxin-like domain. Residues threonine 260 to asparagine 264 and alanine 342 to leucine 369 contribute to the FMN site. A Rubredoxin-like domain is found at glycine 423 to leucine 474. Residues cysteine 428, cysteine 431, cysteine 461, and cysteine 464 each coordinate Fe cation.

It in the N-terminal section; belongs to the zinc metallo-hydrolase group 3 family. Homotetramer. The cofactor is Fe cation. Requires FMN as cofactor.

It is found in the cytoplasm. It functions in the pathway nitrogen metabolism; nitric oxide reduction. Its function is as follows. Anaerobic nitric oxide reductase; uses NADH to detoxify nitric oxide (NO), protecting several 4Fe-4S NO-sensitive enzymes. Has at least 2 reductase partners, only one of which (NorW, flavorubredoxin reductase) has been identified. NO probably binds to the di-iron center; electrons enter from the NorW at rubredoxin and are transferred sequentially to the FMN center and the di-iron center. Also able to function as an aerobic oxygen reductase. In Salmonella paratyphi B (strain ATCC BAA-1250 / SPB7), this protein is Anaerobic nitric oxide reductase flavorubredoxin.